We begin with the raw amino-acid sequence, 231 residues long: Triggering receptor expressed on myeloid cells 1 (231 aa).

The signal sequence occupies residues 1-20 (MRKTRLWGLLWMFFVSELLA). Over 21–202 (ATKLTEEKYE…TDIIRVPVFN (182 aa)) the chain is Extracellular. One can recognise an Ig-like V-type domain in the interval 26 to 131 (EEKYELKEGQ…LFDRIRLVVT (106 aa)). A disulfide bridge links Cys41 with Cys110. 2 stretches are compositionally biased toward polar residues: residues 134–157 (SSGT…TTTK) and 164–182 (TSPT…DVST). A disordered region spans residues 134-182 (SSGTPGSSENSTPNVYKTPPTTTKALRPLYTSPTTVTQAPPKSTADVST). Residues Asn188 and Asn191 are each glycosylated (N-linked (GlcNAc...) asparagine). The helical transmembrane segment at 203-223 (IAILVAGGFLSKSLVFSVLFA) threads the bilayer. The Cytoplasmic segment spans residues 224-231 (VTLRSFVP).

Monomer. Homomultimer; when activated. Interacts with TYROBP/DAP12. Interacts with TLR4.

The protein resides in the cell membrane. Its function is as follows. Cell surface receptor that plays important roles in innate and adaptive immunity by amplifying inflammatory responses. Upon activation by various ligands such as PGLYRP1, HMGB1 or HSP70, multimerizes and forms a complex with transmembrane adapter TYROBP/DAP12. In turn, initiates a SYK-mediated cascade of tyrosine phosphorylation, activating multiple downstream mediators such as BTK, MAPK1, MAPK3 or phospholipase C-gamma. This cascade promotes the neutrophil- and macrophage-mediated release of pro-inflammatory cytokines and/or chemokines, as well as their migration and thereby amplifies inflammatory responses that are triggered by bacterial and fungal infections. By also promoting the amplification of inflammatory signals that are initially triggered by Toll-like receptor (TLR) and NOD-like receptor engagement, plays a major role in the pathophysiology of acute and chronic inflammatory diseases of different etiologies including septic shock and atherosclerosis. The polypeptide is Triggering receptor expressed on myeloid cells 1 (TREM1) (Pongo abelii (Sumatran orangutan)).